Here is a 475-residue protein sequence, read N- to C-terminus: Bifunctional protein HldE (475 aa).

A ribokinase region spans residues 1-320 (MNSSYLNFKD…AIMFQRSHNT (320 aa)). 196 to 199 (NLLE) serves as a coordination point for ATP. D265 is a catalytic residue. Residues 346 to 475 (FTNGCFDILH…TTSIIEKANL (130 aa)) form a cytidylyltransferase region.

It in the N-terminal section; belongs to the carbohydrate kinase PfkB family. The protein in the C-terminal section; belongs to the cytidylyltransferase family. In terms of assembly, homodimer.

It catalyses the reaction D-glycero-beta-D-manno-heptose 7-phosphate + ATP = D-glycero-beta-D-manno-heptose 1,7-bisphosphate + ADP + H(+). It carries out the reaction D-glycero-beta-D-manno-heptose 1-phosphate + ATP + H(+) = ADP-D-glycero-beta-D-manno-heptose + diphosphate. Its pathway is nucleotide-sugar biosynthesis; ADP-L-glycero-beta-D-manno-heptose biosynthesis; ADP-L-glycero-beta-D-manno-heptose from D-glycero-beta-D-manno-heptose 7-phosphate: step 1/4. It participates in nucleotide-sugar biosynthesis; ADP-L-glycero-beta-D-manno-heptose biosynthesis; ADP-L-glycero-beta-D-manno-heptose from D-glycero-beta-D-manno-heptose 7-phosphate: step 3/4. Catalyzes the phosphorylation of D-glycero-D-manno-heptose 7-phosphate at the C-1 position to selectively form D-glycero-beta-D-manno-heptose-1,7-bisphosphate. In terms of biological role, catalyzes the ADP transfer from ATP to D-glycero-beta-D-manno-heptose 1-phosphate, yielding ADP-D-glycero-beta-D-manno-heptose. The protein is Bifunctional protein HldE of Marinomonas sp. (strain MWYL1).